The following is a 201-amino-acid chain: Protease (201 aa).

Residues His53, Asp70, and Cys121 contribute to the active site.

This sequence belongs to the peptidase C5 family. Interacts with protease cofactor pVI-C; this interaction is necessary for protease activation.

It localises to the virion. The protein localises to the host nucleus. It carries out the reaction Cleaves proteins of the adenovirus and its host cell at two consensus sites: -Yaa-Xaa-Gly-Gly-|-Xaa- and -Yaa-Xaa-Gly-Xaa-|-Gly- (in which Yaa is Met, Ile or Leu, and Xaa is any amino acid).. Requires DNA and protease cofactor for maximal activation. Inside nascent virions, becomes partially activated by binding to the viral DNA, allowing it to cleave the cofactor that binds to the protease and fully activates it. Actin, like the viral protease cofactor, seems to act as a cofactor in the cleavage of cytokeratin 18 and of actin itself. Cleaves viral precursor proteins (pTP, pIIIa, pVI, pVII, pVIII, and pX) inside newly assembled particles giving rise to mature virions. Protease complexed to its cofactor slides along the viral DNA to specifically locate and cleave the viral precursors. Mature virions have a weakened organization compared to the unmature virions, thereby facilitating subsequent uncoating. Without maturation, the particle lacks infectivity and is unable to uncoat. Late in adenovirus infection, in the cytoplasm, may participate in the cytoskeleton destruction. Cleaves host cell cytoskeletal keratins K7 and K18. This is Protease from Equine adenovirus B serotype 2 (EAdV-2).